The chain runs to 280 residues: 2,3,4,5-tetrahydropyridine-2,6-dicarboxylate N-succinyltransferase (280 aa).

The protein belongs to the transferase hexapeptide repeat family.

The protein localises to the cytoplasm. The catalysed reaction is (S)-2,3,4,5-tetrahydrodipicolinate + succinyl-CoA + H2O = (S)-2-succinylamino-6-oxoheptanedioate + CoA. It functions in the pathway amino-acid biosynthesis; L-lysine biosynthesis via DAP pathway; LL-2,6-diaminopimelate from (S)-tetrahydrodipicolinate (succinylase route): step 1/3. The polypeptide is 2,3,4,5-tetrahydropyridine-2,6-dicarboxylate N-succinyltransferase (Methylorubrum populi (strain ATCC BAA-705 / NCIMB 13946 / BJ001) (Methylobacterium populi)).